The following is a 149-amino-acid chain: Calmodulin, striated muscle (149 aa).

4 consecutive EF-hand domains span residues 8-43 (EQIA…LGQN), 44-79 (PTEA…KMRD), 81-116 (DSEE…LGEK), and 117-149 (LTDE…MTEK). Ca(2+)-binding residues include Asp-21, Asp-23, Asp-25, Cys-27, Glu-32, Asp-57, Asp-59, Ser-61, Thr-63, Glu-68, Asp-94, Asp-96, Asn-98, Tyr-100, and Glu-105. Lys-116 is modified (N6,N6,N6-trimethyllysine). 5 residues coordinate Ca(2+): Asp-130, Asn-132, Asp-134, Gln-136, and Glu-141.

The protein belongs to the calmodulin family.

This is Calmodulin, striated muscle (CCM1) from Gallus gallus (Chicken).